Reading from the N-terminus, the 529-residue chain is Bifunctional purine biosynthesis protein PurH (529 aa).

One can recognise an MGS-like domain in the interval Met1–Val148. N6-acetyllysine is present on Lys287.

The protein belongs to the PurH family.

The enzyme catalyses (6R)-10-formyltetrahydrofolate + 5-amino-1-(5-phospho-beta-D-ribosyl)imidazole-4-carboxamide = 5-formamido-1-(5-phospho-D-ribosyl)imidazole-4-carboxamide + (6S)-5,6,7,8-tetrahydrofolate. It carries out the reaction IMP + H2O = 5-formamido-1-(5-phospho-D-ribosyl)imidazole-4-carboxamide. It functions in the pathway purine metabolism; IMP biosynthesis via de novo pathway; 5-formamido-1-(5-phospho-D-ribosyl)imidazole-4-carboxamide from 5-amino-1-(5-phospho-D-ribosyl)imidazole-4-carboxamide (10-formyl THF route): step 1/1. It participates in purine metabolism; IMP biosynthesis via de novo pathway; IMP from 5-formamido-1-(5-phospho-D-ribosyl)imidazole-4-carboxamide: step 1/1. This Escherichia coli O9:H4 (strain HS) protein is Bifunctional purine biosynthesis protein PurH.